Here is a 277-residue protein sequence, read N- to C-terminus: Inner kinetochore subunit sim4 (277 aa).

Positions 96–138 (NNISDLKKNLHSNKKLEAVLKEELHQIKKFSSDLQSLKSSMGE) form a coiled coil.

It belongs to the CENP-K/MCM22 family. In terms of assembly, component of the inner kinetochore constitutive centromere-associated network (CCAN) (also known as central kinetochore Sim4 complex in fission yeast), which is composed of at least cnl2, cnp3, cnp20, fta1, fta2, fta3, fta4, fta6, fta7, mal2, mhf1, mhf2, mis6, mis15, mis17, sim4 and wip1. Interacts with mis6 and dad1.

It is found in the nucleus. The protein resides in the chromosome. The protein localises to the centromere. Component of the kinetochore, a multiprotein complex that assembles on centromeric DNA and attaches chromosomes to spindle microtubules, mediating chromosome segregation and sister chromatid segregation during meiosis and mitosis. Component of the inner kinetochore constitutive centromere-associated network (CCAN), which serves as a structural platform for outer kinetochore assembly. This chain is Inner kinetochore subunit sim4 (sim4), found in Schizosaccharomyces pombe (strain 972 / ATCC 24843) (Fission yeast).